An 84-amino-acid polypeptide reads, in one-letter code: UPF0248 protein Pisl_1919 (84 aa).

This sequence belongs to the UPF0248 family.

The chain is UPF0248 protein Pisl_1919 from Pyrobaculum islandicum (strain DSM 4184 / JCM 9189 / GEO3).